The following is a 114-amino-acid chain: Vacuolar morphogenesis protein 10 (114 aa).

It is found in the vacuole membrane. Functionally, required for vacuolar fusion. Involved in the early steps of the fusion pathway. In Saccharomyces cerevisiae (strain ATCC 204508 / S288c) (Baker's yeast), this protein is Vacuolar morphogenesis protein 10 (VAM10).